The following is a 413-amino-acid chain: Multifunctional CCA protein (413 aa).

Residues Gly8 and Arg11 each coordinate ATP. Residues Gly8 and Arg11 each contribute to the CTP site. Asp21 and Asp23 together coordinate Mg(2+). Positions 91, 143, and 146 each coordinate ATP. CTP-binding residues include Arg91, Arg143, and Arg146. Residues 232 to 333 (TGVHVMMVID…VRLLERADAL (102 aa)) form the HD domain.

This sequence belongs to the tRNA nucleotidyltransferase/poly(A) polymerase family. Bacterial CCA-adding enzyme type 1 subfamily. In terms of assembly, monomer. Can also form homodimers and oligomers. Mg(2+) serves as cofactor. It depends on Ni(2+) as a cofactor.

The catalysed reaction is a tRNA precursor + 2 CTP + ATP = a tRNA with a 3' CCA end + 3 diphosphate. The enzyme catalyses a tRNA with a 3' CCA end + 2 CTP + ATP = a tRNA with a 3' CCACCA end + 3 diphosphate. In terms of biological role, catalyzes the addition and repair of the essential 3'-terminal CCA sequence in tRNAs without using a nucleic acid template. Adds these three nucleotides in the order of C, C, and A to the tRNA nucleotide-73, using CTP and ATP as substrates and producing inorganic pyrophosphate. tRNA 3'-terminal CCA addition is required both for tRNA processing and repair. Also involved in tRNA surveillance by mediating tandem CCA addition to generate a CCACCA at the 3' terminus of unstable tRNAs. While stable tRNAs receive only 3'-terminal CCA, unstable tRNAs are marked with CCACCA and rapidly degraded. The chain is Multifunctional CCA protein from Burkholderia pseudomallei (strain K96243).